Consider the following 367-residue polypeptide: Chorismate synthase (367 aa).

NADP(+) is bound by residues Arg48 and Arg54. FMN-binding positions include 125-127 (RSS), 238-239 (NA), Gly278, 293-297 (KPTSS), and Arg319.

Belongs to the chorismate synthase family. As to quaternary structure, homotetramer. It depends on FMNH2 as a cofactor.

It catalyses the reaction 5-O-(1-carboxyvinyl)-3-phosphoshikimate = chorismate + phosphate. Its pathway is metabolic intermediate biosynthesis; chorismate biosynthesis; chorismate from D-erythrose 4-phosphate and phosphoenolpyruvate: step 7/7. Its function is as follows. Catalyzes the anti-1,4-elimination of the C-3 phosphate and the C-6 proR hydrogen from 5-enolpyruvylshikimate-3-phosphate (EPSP) to yield chorismate, which is the branch point compound that serves as the starting substrate for the three terminal pathways of aromatic amino acid biosynthesis. This reaction introduces a second double bond into the aromatic ring system. The sequence is that of Chorismate synthase from Stenotrophomonas maltophilia (strain K279a).